Here is a 208-residue protein sequence, read N- to C-terminus: ATP-dependent Clp protease proteolytic subunit 2 (208 aa).

Ser-102 functions as the Nucleophile in the catalytic mechanism. His-127 is a catalytic residue.

This sequence belongs to the peptidase S14 family. Fourteen ClpP subunits assemble into 2 heptameric rings which stack back to back to give a disk-like structure with a central cavity, resembling the structure of eukaryotic proteasomes.

The protein localises to the cytoplasm. The enzyme catalyses Hydrolysis of proteins to small peptides in the presence of ATP and magnesium. alpha-casein is the usual test substrate. In the absence of ATP, only oligopeptides shorter than five residues are hydrolyzed (such as succinyl-Leu-Tyr-|-NHMec, and Leu-Tyr-Leu-|-Tyr-Trp, in which cleavage of the -Tyr-|-Leu- and -Tyr-|-Trp bonds also occurs).. Its function is as follows. Cleaves peptides in various proteins in a process that requires ATP hydrolysis. Has a chymotrypsin-like activity. Plays a major role in the degradation of misfolded proteins. This chain is ATP-dependent Clp protease proteolytic subunit 2, found in Chelativorans sp. (strain BNC1).